Here is an 81-residue protein sequence, read N- to C-terminus: GAMMA-ctenitoxin-Pn1a (81 aa).

A signal peptide spans 1-16 (MKVAIVFLSLLVLAFA). The propeptide occupies 17 to 34 (SESIEENREEFPVEESAR). 5 disulfides stabilise this stretch: Cys35-Cys49, Cys42-Cys55, Cys46-Cys81, Cys48-Cys65, and Cys57-Cys63.

It belongs to the neurotoxin 03 (Tx2) family. 05 subfamily. Expressed by the venom gland.

Its subcellular location is the secreted. Its function is as follows. This insecticidal neurotoxin targets two types of channels/receptors. It reversibly inhibits the N-methyl-D-aspartate (NMDA)-subtype of ionotropic glutamate receptor (GRIN). It inhibits glutamate uptake from rat brain synaptosomes, and blocks GRIN in hippocampal slices. It also acts on sodium channels of both insects and mammals. On sodium channel insects, it strongly slows down channel inactivation (EC(50)=212.5 nM) and causes an increase (105%) in peak amplitude (at 1 uM) of B.germanica sodium channel (Nav), whereas it inhibits all mammalien sodium channels tested with the following order of potency: Nav1.3/SCN3A (IC(50)=1.5 uM) &gt; Nav1.6/SCN8A &gt; Nav1.5/SCN5A &gt; Nav1.4/SCN4A &gt;= Nav1.2/SCN2A. In vivo, it is highly toxic to house fly (Musca domestica), cockroach (Periplaneta americana), and cricket (Acheta domesticus). In different rat pain models (induced by PGE2, carrageenan or glutamate), it shows antinociceptive effect that may be related to an inhibitory activity on the glutamatergic system. This chain is GAMMA-ctenitoxin-Pn1a, found in Phoneutria nigriventer (Brazilian armed spider).